Consider the following 257-residue polypeptide: Methylthioribulose-1-phosphate dehydratase (257 aa).

Cysteine 107 is a binding site for substrate. Residues histidine 125 and histidine 127 each coordinate Zn(2+). The active-site Proton donor/acceptor is the glutamate 148. Histidine 210 lines the Zn(2+) pocket.

It belongs to the aldolase class II family. MtnB subfamily. Zn(2+) serves as cofactor.

It is found in the cytoplasm. It catalyses the reaction 5-(methylsulfanyl)-D-ribulose 1-phosphate = 5-methylsulfanyl-2,3-dioxopentyl phosphate + H2O. It functions in the pathway amino-acid biosynthesis; L-methionine biosynthesis via salvage pathway; L-methionine from S-methyl-5-thio-alpha-D-ribose 1-phosphate: step 2/6. Functionally, catalyzes the dehydration of methylthioribulose-1-phosphate (MTRu-1-P) into 2,3-diketo-5-methylthiopentyl-1-phosphate (DK-MTP-1-P). This Lachancea thermotolerans (strain ATCC 56472 / CBS 6340 / NRRL Y-8284) (Yeast) protein is Methylthioribulose-1-phosphate dehydratase.